The following is a 502-amino-acid chain: Zinc finger protein 3 homolog (502 aa).

Composition is skewed to basic and acidic residues over residues 1-13 (MGTENKEVIPKEE) and 80-93 (PSSEKDRENNESER). Disordered regions lie at residues 1–26 (MGTENKEVIPKEEISEESEPHGSLLE) and 47–103 (LEGH…NLVT). Glycyl lysine isopeptide (Lys-Gly) (interchain with G-Cter in SUMO2) cross-links involve residues Lys6 and Lys11. 13 C2H2-type zinc fingers span residues 141–163 (HTCKECGKAFNQNSHLIQHMRVH), 169–191 (FECKECGKTFGTNSSLRRHLRIH), 197–219 (FACNECGKAFIQSSHLIHHHRIH), 225–247 (YKCEECGKAFSQNSALILHQRIH), 253–275 (YECNECGKTFRVSSQLIQHQRIH), 281–303 (HECNECGKAFKHSSGLIRHQKIH), 309–331 (YLCNECGKGFGQSSELIRHQRIH), 337–359 (YECNECGKTFGQNSEIIRHIRIH), 365–387 (YVCKECGKAFRGNSELLRHERIH), 393–415 (YECFECGKAFRRTSHLIVHQRIH), 421–443 (HQCNECARTFWDNSELLLHQKIH), 449–471 (YECSECEKTFSQHSQLIIHQRIH), and 477–499 (YECQECQKTFSRSSHLLRHQSVH).

It belongs to the krueppel C2H2-type zinc-finger protein family.

The protein localises to the nucleus. Functionally, may be involved in transcriptional regulation. The sequence is that of Zinc finger protein 3 homolog (ZFP3) from Homo sapiens (Human).